The chain runs to 368 residues: UPF0284 protein Tery_1555 (368 aa).

Belongs to the UPF0284 family.

This is UPF0284 protein Tery_1555 from Trichodesmium erythraeum (strain IMS101).